The chain runs to 1155 residues: DNA-directed RNA polymerase subunit beta (1155 aa).

Belongs to the RNA polymerase beta chain family. The RNAP catalytic core consists of 2 alpha, 1 beta, 1 beta' and 1 omega subunit. When a sigma factor is associated with the core the holoenzyme is formed, which can initiate transcription.

The enzyme catalyses RNA(n) + a ribonucleoside 5'-triphosphate = RNA(n+1) + diphosphate. Its function is as follows. DNA-dependent RNA polymerase catalyzes the transcription of DNA into RNA using the four ribonucleoside triphosphates as substrates. The sequence is that of DNA-directed RNA polymerase subunit beta from Borrelia recurrentis (strain A1).